The primary structure comprises 262 residues: Malonyl-[acyl-carrier protein] O-methyltransferase (262 aa).

The protein belongs to the methyltransferase superfamily.

The catalysed reaction is malonyl-[ACP] + S-adenosyl-L-methionine = malonyl-[ACP] methyl ester + S-adenosyl-L-homocysteine. The protein operates within cofactor biosynthesis; biotin biosynthesis. Converts the free carboxyl group of a malonyl-thioester to its methyl ester by transfer of a methyl group from S-adenosyl-L-methionine (SAM). It allows to synthesize pimeloyl-ACP via the fatty acid synthetic pathway. The polypeptide is Malonyl-[acyl-carrier protein] O-methyltransferase (Erwinia pyrifoliae (strain DSM 12163 / CIP 106111 / Ep16/96)).